The following is a 324-amino-acid chain: Spheroidene monooxygenase (324 aa).

Residues 226–324 (GKDPVGEALT…PGKGGRKENA (99 aa)) form a disordered region. Low complexity-rich tracts occupy residues 248–278 (PAAA…VEMP) and 287–313 (VVEA…NFKG).

The protein belongs to the CrtA family. Heme is required as a cofactor.

The enzyme catalyses spheroidene + 4 reduced [2Fe-2S]-[ferredoxin] + 2 O2 + 4 H(+) = spheroiden-2-one + 4 oxidized [2Fe-2S]-[ferredoxin] + 3 H2O. The catalysed reaction is spheroidene + 2 reduced [2Fe-2S]-[ferredoxin] + O2 + 2 H(+) = 2-hydroxyspheroidene + 2 oxidized [2Fe-2S]-[ferredoxin] + H2O. It carries out the reaction 2-hydroxyspheroidene + 2 reduced [2Fe-2S]-[ferredoxin] + O2 + 2 H(+) = 2,2-dihydroxyspheroidene + 2 oxidized [2Fe-2S]-[ferredoxin] + H2O. It catalyses the reaction 2,2-dihydroxyspheroidene = spheroiden-2-one + H2O. Its pathway is carotenoid biosynthesis; spheroidene biosynthesis. In terms of biological role, involved in the biosynthesis of the carotenoid spheroidene. Catalyzes the introduction of one keto group at the C-2 position of spheroidene. In vitro, can use nonnative substrates and produce oxocarotenoids with a hydroxy and/or a keto group, derived from neurosporene, lycopene, 3,4-didehydrolycopene or 3,4,3',4'-tetradehydrolycopene. In Cereibacter sphaeroides (strain ATCC 17023 / DSM 158 / JCM 6121 / CCUG 31486 / LMG 2827 / NBRC 12203 / NCIMB 8253 / ATH 2.4.1.) (Rhodobacter sphaeroides), this protein is Spheroidene monooxygenase.